The sequence spans 135 residues: C-type lectin BpLec (135 aa).

Intrachain disulfides connect Cys3-Cys14, Cys31-Cys131, Cys38-Cys133, and Cys106-Cys123. A C-type lectin domain is found at Met10–Gln132. Gln96, Asp98, Glu104, Asn119, and Asp120 together coordinate Ca(2+). A Galactose-binding motif is present at residues Gln96–Asp98.

This sequence belongs to the true venom lectin family. In terms of assembly, homodimer; disulfide-linked. As to expression, expressed by the venom gland.

The protein resides in the secreted. Its function is as follows. This lectin displays hemagglutinating activity on dog (128'000 HU/mg) and cat erythrocytes, that is inhibited by beta-galactosides (D-galactose, D-lactose, and N-acetyl-D-galactosamine) and EDTA. In addition, has been shown to hemagglutinate promastigote forms of Leishmania amazonensis. Also inhibits Gram-positive (S.aureus ATCC 25923) (MIC is 31.25 ug/ml) but not Gram-negative (E.coli ATCC 25922) bacteria. Is a calcium-dependent lectin. The chain is C-type lectin BpLec from Bothrops pauloensis (Neuwied's lancehead).